The following is a 313-amino-acid chain: Porphobilinogen deaminase (313 aa).

Residue Cys-249 is modified to S-(dipyrrolylmethanemethyl)cysteine.

The protein belongs to the HMBS family. Monomer. Dipyrromethane serves as cofactor.

The catalysed reaction is 4 porphobilinogen + H2O = hydroxymethylbilane + 4 NH4(+). It participates in porphyrin-containing compound metabolism; protoporphyrin-IX biosynthesis; coproporphyrinogen-III from 5-aminolevulinate: step 2/4. Its function is as follows. Tetrapolymerization of the monopyrrole PBG into the hydroxymethylbilane pre-uroporphyrinogen in several discrete steps. In Paracoccus denitrificans (strain Pd 1222), this protein is Porphobilinogen deaminase.